Consider the following 227-residue polypeptide: Cytochrome c oxidase subunit 2 (227 aa).

Residues 1 to 14 (MAYPFQLGLQDATS) lie on the Mitochondrial intermembrane side of the membrane. A helical membrane pass occupies residues 15–45 (PIMEELMNFHDHTLMIVFLISSLVLYIISLM). At 46 to 59 (LTTKLTHTSTMDAQ) the chain is on the mitochondrial matrix side. The chain crosses the membrane as a helical span at residues 60 to 87 (EVETIWTILPAAILILIALPSLRILYMM). At 88-227 (DEINNPVLTV…YFENWSASMI (140 aa)) the chain is on the mitochondrial intermembrane side. Cu cation is bound by residues His161, Cys196, Glu198, Cys200, His204, and Met207. Glu198 lines the Mg(2+) pocket.

The protein belongs to the cytochrome c oxidase subunit 2 family. Component of the cytochrome c oxidase (complex IV, CIV), a multisubunit enzyme composed of 14 subunits. The complex is composed of a catalytic core of 3 subunits MT-CO1, MT-CO2 and MT-CO3, encoded in the mitochondrial DNA, and 11 supernumerary subunits COX4I, COX5A, COX5B, COX6A, COX6B, COX6C, COX7A, COX7B, COX7C, COX8 and NDUFA4, which are encoded in the nuclear genome. The complex exists as a monomer or a dimer and forms supercomplexes (SCs) in the inner mitochondrial membrane with NADH-ubiquinone oxidoreductase (complex I, CI) and ubiquinol-cytochrome c oxidoreductase (cytochrome b-c1 complex, complex III, CIII), resulting in different assemblies (supercomplex SCI(1)III(2)IV(1) and megacomplex MCI(2)III(2)IV(2)). Found in a complex with TMEM177, COA6, COX18, COX20, SCO1 and SCO2. Interacts with TMEM177 in a COX20-dependent manner. Interacts with COX20. Interacts with COX16. Cu cation serves as cofactor.

It localises to the mitochondrion inner membrane. The catalysed reaction is 4 Fe(II)-[cytochrome c] + O2 + 8 H(+)(in) = 4 Fe(III)-[cytochrome c] + 2 H2O + 4 H(+)(out). Its function is as follows. Component of the cytochrome c oxidase, the last enzyme in the mitochondrial electron transport chain which drives oxidative phosphorylation. The respiratory chain contains 3 multisubunit complexes succinate dehydrogenase (complex II, CII), ubiquinol-cytochrome c oxidoreductase (cytochrome b-c1 complex, complex III, CIII) and cytochrome c oxidase (complex IV, CIV), that cooperate to transfer electrons derived from NADH and succinate to molecular oxygen, creating an electrochemical gradient over the inner membrane that drives transmembrane transport and the ATP synthase. Cytochrome c oxidase is the component of the respiratory chain that catalyzes the reduction of oxygen to water. Electrons originating from reduced cytochrome c in the intermembrane space (IMS) are transferred via the dinuclear copper A center (CU(A)) of subunit 2 and heme A of subunit 1 to the active site in subunit 1, a binuclear center (BNC) formed by heme A3 and copper B (CU(B)). The BNC reduces molecular oxygen to 2 water molecules using 4 electrons from cytochrome c in the IMS and 4 protons from the mitochondrial matrix. The polypeptide is Cytochrome c oxidase subunit 2 (MT-CO2) (Leggadina forresti (Forrest's mouse)).